The primary structure comprises 131 residues: Large ribosomal subunit protein bL19 (131 aa).

It belongs to the bacterial ribosomal protein bL19 family.

Functionally, this protein is located at the 30S-50S ribosomal subunit interface and may play a role in the structure and function of the aminoacyl-tRNA binding site. The polypeptide is Large ribosomal subunit protein bL19 (Caulobacter sp. (strain K31)).